The following is a 151-amino-acid chain: Deoxyuridine 5'-triphosphate nucleotidohydrolase (151 aa).

Arg-28 lines the Mg(2+) pocket. DUTP is bound by residues 72–74, 86–89, Tyr-92, Gly-97, Ile-99, and Arg-115; these read PRS and GVID.

This sequence belongs to the dUTPase family. Mg(2+) serves as cofactor.

It catalyses the reaction dUTP + H2O = dUMP + diphosphate + H(+). In terms of biological role, this enzyme is involved in nucleotide metabolism: it produces dUMP, the immediate precursor of thymidine nucleotides and it decreases the intracellular concentration of dUTP so that uracil cannot be incorporated into DNA. The sequence is that of Deoxyuridine 5'-triphosphate nucleotidohydrolase (OPG046) from Monkeypox virus.